The primary structure comprises 236 residues: T-cell surface glycoprotein CD8 alpha chain (236 aa).

The N-terminal stretch at 1-26 is a signal peptide; the sequence is MASRVICFLSLNLLLLDVITRLQVSG. The region spanning 27–130 is the Ig-like V-type domain; that stretch reads QLQLSPKKVD…ITSNSVMYFS (104 aa). Topologically, residues 27-189 are extracellular; sequence QLQLSPKKVD…MGLGFACDIY (163 aa). A disulfide bond links C47 and C119. Residue N63 is glycosylated (N-linked (GlcNAc...) asparagine). A glycan (O-linked (GalNAc...) threonine; partial) is linked at T144. O-linked (GalNAc...) threonine glycosylation is found at T148, T152, T158, and T160. Residues 150 to 170 form a disordered region; it reads APTPVPPPTGTPRPLRPEACR. The chain crosses the membrane as a helical span at residues 190–210; the sequence is IWAPLAGICAVLLLSLVITLI. A lipid anchor (S-palmitoyl cysteine) is attached at C211. Residues 211–236 are Cytoplasmic-facing; that stretch reads CCHRNRRRVCKCPRPLVKPRPSEKFV.

As to quaternary structure, forms disulfide-linked heterodimers with CD8B at the cell surface. Also forms homodimers in several cell types including NK-cells or peripheral blood T-lymphocytes. Interacts with the MHC class I HLA-A/B2M dimer. Interacts with LCK in a zinc-dependent manner. Post-translationally, palmitoylated, but association with CD8B seems to be more important for the enrichment of CD8A in lipid rafts. In terms of processing, O-glycosylated. Phosphorylated in cytotoxic T-lymphocytes (CTLs) following activation.

The protein resides in the cell membrane. Functionally, integral membrane glycoprotein that plays an essential role in the immune response and serves multiple functions in responses against both external and internal offenses. In T-cells, functions primarily as a coreceptor for MHC class I molecule:peptide complex. The antigens presented by class I peptides are derived from cytosolic proteins while class II derived from extracellular proteins. Interacts simultaneously with the T-cell receptor (TCR) and the MHC class I proteins presented by antigen presenting cells (APCs). In turn, recruits the Src kinase LCK to the vicinity of the TCR-CD3 complex. LCK then initiates different intracellular signaling pathways by phosphorylating various substrates ultimately leading to lymphokine production, motility, adhesion and activation of cytotoxic T-lymphocytes (CTLs). This mechanism enables CTLs to recognize and eliminate infected cells and tumor cells. In NK-cells, the presence of CD8A homodimers at the cell surface provides a survival mechanism allowing conjugation and lysis of multiple target cells. CD8A homodimer molecules also promote the survival and differentiation of activated lymphocytes into memory CD8 T-cells. The protein is T-cell surface glycoprotein CD8 alpha chain (Cd8a) of Rattus norvegicus (Rat).